A 716-amino-acid chain; its full sequence is Probable extracellular serine carboxypeptidase (716 aa).

The N-terminal stretch at 1-17 (MVKLTACLLLLVAAVQA) is a signal peptide. N143 and N174 each carry an N-linked (GlcNAc...) asparagine glycan. S188 (charge relay system) is an active-site residue. N-linked (GlcNAc...) asparagine glycosylation is found at N258 and N354. D466 acts as the Charge relay system in catalysis. N-linked (GlcNAc...) asparagine glycans are attached at residues N507 and N550. The interval 617–636 (RDLAAQPSKSKKDRRGQQLS) is disordered. Residues 652–672 (LGFVSFLVFAFSSFTFIPDIE) form a helical membrane-spanning segment.

It belongs to the peptidase S28 family.

The protein localises to the membrane. The protein resides in the secreted. The protein is Probable extracellular serine carboxypeptidase of Arthroderma benhamiae (strain ATCC MYA-4681 / CBS 112371) (Trichophyton mentagrophytes).